We begin with the raw amino-acid sequence, 220 residues long: Riboflavin kinase (220 aa).

An H-T-H motif-like region spans residues methionine 1–asparagine 92. Residues isoleucine 93–alanine 220 are riboflavin kinase. Glycine 102–lysine 107 is a CDP binding site. Residues threonine 131 and asparagine 133 each contribute to the Mg(2+) site. FMN is bound by residues threonine 188 and glutamate 195. Lysine 200–arginine 203 is a binding site for CDP.

The protein belongs to the archaeal riboflavin kinase family. It depends on Mg(2+) as a cofactor.

It catalyses the reaction riboflavin + CTP = CDP + FMN + H(+). Its pathway is cofactor biosynthesis; FMN biosynthesis; FMN from riboflavin (CTP route): step 1/1. Its function is as follows. Catalyzes the CTP-dependent phosphorylation of riboflavin (vitamin B2) to form flavin mononucleotide (FMN). The protein is Riboflavin kinase (ribK) of Thermoplasma volcanium (strain ATCC 51530 / DSM 4299 / JCM 9571 / NBRC 15438 / GSS1).